The primary structure comprises 686 residues: MSNQHRQILVTCALPYANGPIHLGHMLEHIQADIWVRFQRMRGNEIHFVCADDAHGTPIMLKADQMGITPEQLIADVKEKHYADFCGFNISFDNYHSTHSEENRELSELIYSRLKENGFIKSRTISQLFDPEKSMFLPDRFVKGTCPKCKAEDQYGDNCEVCSATYSPTELINPRSAVSGATPVIKESEHFFFDLPSFESMLKEWNRSGALQSEVANKMQEWFDAGLQQWDISRDAPYFGFKIPGTENKYFYVWLDAPIGYMASFKNLCKRENLDFDRFWNKDSNTELYHFIGKDIMYFHSLFWPAMLDGANYRKPTNIFVHGYVTVNGEKMSKSRGTFIQAATYLKHLDPECLRYYYAAKLSNRIDDLDLNLDDFVQRVNTDLVNKLVNLASRNAGFIQKRFDGKLADKLEDESLFAEFIAQSEQIAAYYENREFGKAIREIMALTDKANKYVDDKAPWVIAKEEGREAELQAVCSMGIQLFRVLMGYLKPVLPKLAERSEAFLQAELTWDNLAQPLLNHGIAPFKALFSRLDVKQIDAMIEASKAENAAVNATVKKEEKNSKKSTALLTDFEPIEPEISIDDFAKIDLRVAKVIKCEEVPESKKLLKFQLDLGFEQRQVLSGIKGAYNNPEELEGRFVIVVANLAPRKMKFGVSEGMILSAGTGGEDLYLLDVDAGVKAGSRVM.

Residues Pro-15 to His-25 carry the 'HIGH' region motif. Zn(2+) is bound by residues Cys-146, Cys-149, Cys-159, and Cys-162. The 'KMSKS' region motif lies at Lys-331 to Ser-335. Lys-334 provides a ligand contact to ATP. The tRNA-binding domain occupies Asp-584–Met-686.

It belongs to the class-I aminoacyl-tRNA synthetase family. MetG type 1 subfamily. As to quaternary structure, homodimer. It depends on Zn(2+) as a cofactor.

Its subcellular location is the cytoplasm. It catalyses the reaction tRNA(Met) + L-methionine + ATP = L-methionyl-tRNA(Met) + AMP + diphosphate. Functionally, is required not only for elongation of protein synthesis but also for the initiation of all mRNA translation through initiator tRNA(fMet) aminoacylation. This chain is Methionine--tRNA ligase, found in Mannheimia succiniciproducens (strain KCTC 0769BP / MBEL55E).